A 397-amino-acid polypeptide reads, in one-letter code: UDP-GlcNAc:betaGal beta-1,3-N-acetylglucosaminyltransferase 7 (397 aa).

At 1 to 6 (MSLWKK) the chain is on the cytoplasmic side. Residues 7-26 (TLYKSVCLALALLVAVTVFQ) form a helical membrane-spanning segment. The Lumenal portion of the chain corresponds to 27-397 (RSVTPGQFLQ…LTCSVKFQVL (371 aa)). 4 N-linked (GlcNAc...) asparagine glycosylation sites follow: N84, N90, N210, and N387.

This sequence belongs to the glycosyltransferase 31 family. Strongly expressed in placenta and colon. Moderately expressed in lung, stomach, small intestine and kidney. Very weakly expressed in cerebrum, cerebellum, heart and testis.

It is found in the golgi apparatus membrane. The protein operates within protein modification; protein glycosylation. In terms of biological role, N-acetyl glucosamine (GlcNAc) transferase that catalyzes the transfer of GlcNAc via a beta1-&gt;3 linkage from UDP-GlcNAc to the non-reducing terminal galactose (Gal) in the linearly growing chain of N- and O-linked keratan sulfate proteoglycans. Cooperates with B4GALT4 galactosyltransferase and CHST6 and CHST1 sulfotransferases to construct and elongate mono- and disulfated disaccharide units [-&gt;3Galbeta1-&gt;4(6-sulfoGlcNAcbeta)1-&gt;] and [-&gt;3(6-sulfoGalbeta)1-&gt;4(6-sulfoGlcNAcbeta)1-&gt;] within keratan sulfate polymer. Involved in biosynthesis of N-linked keratan sulfate proteoglycans in cornea, with an impact on proteoglycan fibril organization and corneal transparency. May play a role in the maintenance of tissue architecture by suppressing cellular motility and invasion. The protein is UDP-GlcNAc:betaGal beta-1,3-N-acetylglucosaminyltransferase 7 (B3gnt7) of Mus musculus (Mouse).